The sequence spans 100 residues: Acylphosphatase (100 aa).

Positions 3 to 92 (RRSYSVIGRV…PLPDTFDIRF (90 aa)) constitute an Acylphosphatase-like domain. Residues R18 and N36 contribute to the active site. The disordered stretch occupies residues 76-100 (DDPAHEGPLPDTFDIRFRAPGSASE).

The protein belongs to the acylphosphatase family.

The catalysed reaction is an acyl phosphate + H2O = a carboxylate + phosphate + H(+). The chain is Acylphosphatase (acyP) from Nitratidesulfovibrio vulgaris (strain ATCC 29579 / DSM 644 / CCUG 34227 / NCIMB 8303 / VKM B-1760 / Hildenborough) (Desulfovibrio vulgaris).